Here is a 286-residue protein sequence, read N- to C-terminus: 4-hydroxybenzoate octaprenyltransferase (286 aa).

The next 7 membrane-spanning stretches (helical) occupy residues 20 to 40 (IGTLLLMWPCLMALVLAAGGM), 43 to 63 (LKVLVIFIIGVVVMRACGCII), 96 to 116 (LFVVMGLIAFGLVLMLNPLVV), 142 to 162 (FLGVVWSWSIPMAYAAQTGTV), 167 to 187 (WWLFAANWCWTVAYDTMYAMV), 210 to 230 (QVIALFQLAALACFIIAGWAA), and 234 to 254 (LVYALGIITFVGFSLYQQKLI).

It belongs to the UbiA prenyltransferase family. It depends on Mg(2+) as a cofactor.

It localises to the cell inner membrane. The enzyme catalyses all-trans-octaprenyl diphosphate + 4-hydroxybenzoate = 4-hydroxy-3-(all-trans-octaprenyl)benzoate + diphosphate. It functions in the pathway cofactor biosynthesis; ubiquinone biosynthesis. In terms of biological role, catalyzes the prenylation of para-hydroxybenzoate (PHB) with an all-trans polyprenyl group. Mediates the second step in the final reaction sequence of ubiquinone-8 (UQ-8) biosynthesis, which is the condensation of the polyisoprenoid side chain with PHB, generating the first membrane-bound Q intermediate 3-octaprenyl-4-hydroxybenzoate. This is 4-hydroxybenzoate octaprenyltransferase from Shewanella woodyi (strain ATCC 51908 / MS32).